Reading from the N-terminus, the 307-residue chain is Ribosomal RNA small subunit methyltransferase H (307 aa).

S-adenosyl-L-methionine is bound by residues glycine 32–histidine 34, aspartate 52, phenylalanine 78, aspartate 99, and glutamine 106.

This sequence belongs to the methyltransferase superfamily. RsmH family.

It is found in the cytoplasm. It catalyses the reaction cytidine(1402) in 16S rRNA + S-adenosyl-L-methionine = N(4)-methylcytidine(1402) in 16S rRNA + S-adenosyl-L-homocysteine + H(+). Specifically methylates the N4 position of cytidine in position 1402 (C1402) of 16S rRNA. The chain is Ribosomal RNA small subunit methyltransferase H from Acinetobacter baumannii (strain SDF).